The chain runs to 568 residues: bZIP transcription factor 60 (568 aa).

Low complexity-rich tracts occupy residues 1–13 (MAEP…FADL) and 60–78 (TTSS…TSSA). 2 disordered regions span residues 1 to 29 (MAEP…TLGD) and 45 to 134 (DFDV…RKKQ). Residues 1 to 240 (MAEPDLLAPF…PAKKARKTKK (240 aa)) lie on the Cytoplasmic side of the membrane. A compositionally biased stretch (basic and acidic residues) spans 103 to 113 (GGKDGKDDEAK). One can recognise a bZIP domain in the interval 111-171 (EAKRRARLVR…AENAALKQQL (61 aa)). A basic motif region spans residues 113-144 (KRRARLVRNRESAHQSRQRKKQYVEELEGKVK). Residues 150–157 (IADLTARI) form a leucine-zipper region. Residues 241–261 (VAGVSLLGLLFLMMVCGCLVP) traverse the membrane as a helical segment. Residues 262-568 (AVNRMYGAAY…LPFKSHSPHL (307 aa)) are Lumenal-facing. 5 N-linked (GlcNAc...) asparagine glycosylation sites follow: N307, N452, N456, N488, and N499. A disordered region spans residues 479–510 (AIPLRGSTSNDTDHFKAPPKNHSQSHAGRKPV).

It belongs to the bZIP family.

It is found in the endoplasmic reticulum membrane. It localises to the nucleus. Functionally, transcription factor involved in endoplasmic reticulum (ER) stress response. Acts as a ER stress sensor and activates the transcription factor BZIP50 and the chaperone BIP1. In Oryza sativa subsp. japonica (Rice), this protein is bZIP transcription factor 60.